The chain runs to 206 residues: Transmembrane emp24 domain-containing protein bai (206 aa).

A signal peptide spans 1-17; sequence MAKATFFYFLFIGYVWP. The Lumenal segment spans residues 18 to 172; sequence IDSVMFNLAP…RDTNEKTNSR (155 aa). Residues 30–140 form the GOLD domain; the sequence is QKCLKEDIQA…LKPLEVDLKR (111 aa). The chain crosses the membrane as a helical span at residues 173 to 193; it reads VLFFSIFSMCCLLGLATWQVL. The Cytoplasmic segment spans residues 194–206; it reads YLRRYFKAKKLIE.

This sequence belongs to the EMP24/GP25L family.

It is found in the membrane. Eca and bai are essential, though not redundant, for dorsoventral patterning of the embryo. Specifically required during early embryogenesis for the activity of maternal tkv, while the zygotic tkv is not affected. The chain is Transmembrane emp24 domain-containing protein bai from Drosophila persimilis (Fruit fly).